The primary structure comprises 149 residues: Large ribosomal subunit protein bL9 (149 aa).

It belongs to the bacterial ribosomal protein bL9 family.

Functionally, binds to the 23S rRNA. The polypeptide is Large ribosomal subunit protein bL9 (Salinibacter ruber (strain DSM 13855 / M31)).